The following is a 198-amino-acid chain: Putative 3-methyladenine DNA glycosylase (198 aa).

It belongs to the DNA glycosylase MPG family.

This chain is Putative 3-methyladenine DNA glycosylase, found in Rhizobium johnstonii (strain DSM 114642 / LMG 32736 / 3841) (Rhizobium leguminosarum bv. viciae).